The sequence spans 943 residues: Isoleucine--tRNA ligase (943 aa).

Residues 59 to 69 carry the 'HIGH' region motif; that stretch reads PYANGQIHLGH. Glu577 lines the L-isoleucyl-5'-AMP pocket. The 'KMSKS' region motif lies at 618 to 622; that stretch reads KMSKS. Lys621 serves as a coordination point for ATP. Residues Cys906, Cys909, Cys926, and Cys929 each contribute to the Zn(2+) site.

Belongs to the class-I aminoacyl-tRNA synthetase family. IleS type 1 subfamily. As to quaternary structure, monomer. It depends on Zn(2+) as a cofactor.

It is found in the cytoplasm. It carries out the reaction tRNA(Ile) + L-isoleucine + ATP = L-isoleucyl-tRNA(Ile) + AMP + diphosphate. In terms of biological role, catalyzes the attachment of isoleucine to tRNA(Ile). As IleRS can inadvertently accommodate and process structurally similar amino acids such as valine, to avoid such errors it has two additional distinct tRNA(Ile)-dependent editing activities. One activity is designated as 'pretransfer' editing and involves the hydrolysis of activated Val-AMP. The other activity is designated 'posttransfer' editing and involves deacylation of mischarged Val-tRNA(Ile). This is Isoleucine--tRNA ligase from Xanthomonas campestris pv. campestris (strain B100).